The following is a 314-amino-acid chain: Putative peptide transport system permease protein BRA1092/BS1330_II1084 (314 aa).

6 helical membrane passes run 12–32 (AIPVMLIVAILTFLLMKLLPG), 101–121 (LALLAFAITIPVGIIMGVVAA), 135–155 (LALLGVSVPSFWLAILAVILF), 177–197 (WLRSLILPASILALFQIGYLA), 237–257 (VSVLTVSGYIFSLLIGGSVVI), and 286–306 (MLFLGFLFVAINVLVDILYTI). In terms of domain architecture, ABC transmembrane type-1 spans 95–304 (LPVTISLALL…AINVLVDILY (210 aa)).

The protein belongs to the binding-protein-dependent transport system permease family. The complex is composed of two ATP-binding proteins (BRA1094), two transmembrane proteins (BRA1092 and BRA1093) and a solute-binding protein (BRA1090).

The protein localises to the cell inner membrane. In terms of biological role, probably part of an ABC transporter complex that could be involved in peptide import. Probably responsible for the translocation of the substrate across the membrane. In Brucella suis biovar 1 (strain 1330), this protein is Putative peptide transport system permease protein BRA1092/BS1330_II1084.